The sequence spans 664 residues: tRNA (carboxymethyluridine(34)-5-O)-methyltransferase ALKBH8 (664 aa).

Positions 43 to 120 (QSLVVANGGL…QKIILYLNFV (78 aa)) constitute an RRM domain. One can recognise a Fe2OG dioxygenase domain in the interval 220 to 337 (KPDQMTINQY…RTSFTFRKVR (118 aa)). Residue 227–229 (NQY) participates in 2-oxoglutarate binding. Positions 238 and 240 each coordinate Fe cation. Zn(2+) is bound at residue histidine 242. Fe cation is bound at residue histidine 292. 2-oxoglutarate-binding residues include arginine 328 and arginine 334. 3 residues coordinate Zn(2+): cysteine 341, cysteine 343, and cysteine 349. The interval 411–664 (ADIGCGNGKY…GNWCVILQKA (254 aa)) is methyltransferase domain. The interval 516–575 (KYLKGNRNSQGKKEEMNSDTSVQRSLVEQMPDMGSRDSASSVPRINDSQEGGCNSRQVSN) is disordered. Positions 552–575 (DSASSVPRINDSQEGGCNSRQVSN) are enriched in polar residues.

Belongs to the alkB family. In terms of assembly, interacts with TRMT112. It depends on Fe(2+) as a cofactor.

The protein resides in the cytoplasm. Its subcellular location is the nucleus. The catalysed reaction is 5-(carboxymethyl)uridine(34) in tRNA + S-adenosyl-L-methionine = 5-(2-methoxy-2-oxoethyl)uridine(34) in tRNA + S-adenosyl-L-homocysteine. In terms of biological role, catalyzes the methylation of 5-carboxymethyl uridine to 5-methylcarboxymethyl uridine at the wobble position of the anticodon loop in tRNA via its methyltransferase domain. Catalyzes the last step in the formation of 5-methylcarboxymethyl uridine at the wobble position of the anticodon loop in target tRNA. Has a preference for tRNA(Arg) and tRNA(Glu), and does not bind tRNA(Lys). Binds tRNA and catalyzes the iron and alpha-ketoglutarate dependent hydroxylation of 5-methylcarboxymethyl uridine at the wobble position of the anticodon loop in tRNA via its dioxygenase domain, giving rise to 5-(S)-methoxycarbonylhydroxymethyluridine; has a preference for tRNA(Gly). Required for normal survival after DNA damage. May inhibit apoptosis and promote cell survival and angiogenesis. This Macaca fascicularis (Crab-eating macaque) protein is tRNA (carboxymethyluridine(34)-5-O)-methyltransferase ALKBH8 (ALKBH8).